A 198-amino-acid chain; its full sequence is Na(+)-translocating NADH-quinone reductase subunit E (198 aa).

The next 6 helical transmembrane spans lie at 11–31, 35–55, 77–97, 110–130, 140–160, and 176–196; these read SVFI…FLAV, VSTA…SVPV, FLNF…LEMI, GIFL…SFMV, VVYG…LAGI, and LGIT…FSGV.

This sequence belongs to the NqrDE/RnfAE family. In terms of assembly, composed of six subunits; NqrA, NqrB, NqrC, NqrD, NqrE and NqrF.

It localises to the cell inner membrane. The catalysed reaction is a ubiquinone + n Na(+)(in) + NADH + H(+) = a ubiquinol + n Na(+)(out) + NAD(+). In terms of biological role, NQR complex catalyzes the reduction of ubiquinone-1 to ubiquinol by two successive reactions, coupled with the transport of Na(+) ions from the cytoplasm to the periplasm. NqrA to NqrE are probably involved in the second step, the conversion of ubisemiquinone to ubiquinol. This Histophilus somni (strain 129Pt) (Haemophilus somnus) protein is Na(+)-translocating NADH-quinone reductase subunit E.